The chain runs to 324 residues: Phospho-N-acetylmuramoyl-pentapeptide-transferase (324 aa).

10 consecutive transmembrane segments (helical) span residues 9 to 29, 53 to 73, 77 to 97, 117 to 137, 147 to 167, 176 to 196, 201 to 221, 227 to 247, 253 to 273, and 304 to 324; these read TFAV…PFLV, TMGA…FSFI, VSAA…LGFL, FLGQ…NGFA, IEVD…VGFS, LDGL…VIAF, MDVA…LLFN, IFMG…ISIL, LLLL…LQVF, and VLTF…VVIF.

Belongs to the glycosyltransferase 4 family. MraY subfamily. Requires Mg(2+) as cofactor.

The protein localises to the cell membrane. It carries out the reaction UDP-N-acetyl-alpha-D-muramoyl-L-alanyl-gamma-D-glutamyl-meso-2,6-diaminopimeloyl-D-alanyl-D-alanine + di-trans,octa-cis-undecaprenyl phosphate = di-trans,octa-cis-undecaprenyl diphospho-N-acetyl-alpha-D-muramoyl-L-alanyl-D-glutamyl-meso-2,6-diaminopimeloyl-D-alanyl-D-alanine + UMP. It functions in the pathway cell wall biogenesis; peptidoglycan biosynthesis. In terms of biological role, catalyzes the initial step of the lipid cycle reactions in the biosynthesis of the cell wall peptidoglycan: transfers peptidoglycan precursor phospho-MurNAc-pentapeptide from UDP-MurNAc-pentapeptide onto the lipid carrier undecaprenyl phosphate, yielding undecaprenyl-pyrophosphoryl-MurNAc-pentapeptide, known as lipid I. This is Phospho-N-acetylmuramoyl-pentapeptide-transferase from Listeria monocytogenes serotype 4b (strain CLIP80459).